A 762-amino-acid chain; its full sequence is Cellulose synthase-like protein H2 (762 aa).

Low complexity predominate over residues 1 to 15; that stretch reads MAVVAAAAATGSTTR. Residues 1–39 form a disordered region; that stretch reads MAVVAAAAATGSTTRSGGGGGEGTRSGRKKPPPPPLQER. The next 2 helical transmembrane spans lie at 47 to 67 and 81 to 101; these read AWAW…LLAL and GVWR…ALNV. Residues aspartate 180 and aspartate 470 contribute to the active site. The next 6 membrane-spanning stretches (helical) occupy residues 541–561, 582–602, 619–639, 673–693, 708–728, and 739–759; these read LAYL…CYGL, FSVP…EYMA, IISV…SLGL, LPVF…VTVG, APGI…FPFV, and GIPW…VTFC.

This sequence belongs to the glycosyltransferase 2 family. Plant cellulose synthase-like H subfamily.

It is found in the golgi apparatus membrane. Its function is as follows. Thought to be a Golgi-localized beta-glycan synthase that polymerize the backbones of noncellulosic polysaccharides (hemicelluloses) of plant cell wall. This is Cellulose synthase-like protein H2 (CSLH2) from Oryza sativa subsp. indica (Rice).